The sequence spans 947 residues: Serine-aspartate repeat-containing protein C (947 aa).

A signal peptide spans M1–A50. The interval A51–K164 is disordered. The segment at A51–K495 is ligand binding A region. Residues G56–N71 show a composition bias toward polar residues. Residues K72–K83 are compositionally biased toward basic and acidic residues. Polar residues predominate over residues D84–S155. CNA-B domains lie at K496–P606 and K607–T717. Residues T678 to G927 form a disordered region. Acidic residues-rich tracts occupy residues T685–E695 and Y712–S886. The LPXTG sorting signal motif lies at L910–G914. Residues E912–G927 show a composition bias toward low complexity. Position 913 is a pentaglycyl murein peptidoglycan amidated threonine (T913). Residues G914 to K947 constitute a propeptide, removed by sortase.

Belongs to the serine-aspartate repeat-containing protein (SDr) family. In terms of assembly, homodimerizes; via N2-Domain. Interacts with host NRXN1; this interaction mediates bacterial attachment to host cells.

The protein localises to the secreted. It localises to the cell wall. Functionally, cell surface-associated calcium-binding protein which plays an important role in adhesion and pathogenesis. Mediates interactions with components of the extracellular matrix such as host NRXN1 to promote bacterial adhesion. This Staphylococcus aureus (strain COL) protein is Serine-aspartate repeat-containing protein C (sdrC).